The chain runs to 291 residues: Transmembrane protein 41B (291 aa).

The interval 1-38 (MAKGRVAERSQMGADHTTPVGDGAAGTRGPAAPGSRDY) is disordered. T18 carries the phosphothreonine modification. The segment covering 21–34 (GDGAAGTRGPAAPG) has biased composition (low complexity). Position 35 is a phosphoserine (S35). 6 consecutive transmembrane segments (helical) span residues 52-72 (MSLLILVSIFLSAAFVMFLVY), 109-129 (FYVQVLVAYFATYIFLQTFAI), 147-169 (LALFLVCLCSGLGASFCYMLSYL), 197-217 (LINYIIFLRITPFLPNWFINI), 225-245 (PLKVFFIGTFLGVAPPSFVAI), and 262-282 (SWNSIFILMILAVLSILPAIF). The tract at residues 140 to 251 (GFLYPFPLAL…FVAIKAGTTL (112 aa)) is VTT domain; required for its function in autophagy.

This sequence belongs to the TMEM41 family. In terms of assembly, interacts with VMP1. Interacts with COPA, COPB1, VDAC1 and ERLIN2. Interacts with ATG2A. Interacts with SURF4.

The protein resides in the endoplasmic reticulum membrane. Its subcellular location is the endomembrane system. It carries out the reaction a 1,2-diacyl-sn-glycero-3-phospho-L-serine(in) = a 1,2-diacyl-sn-glycero-3-phospho-L-serine(out). The enzyme catalyses cholesterol(in) = cholesterol(out). It catalyses the reaction a 1,2-diacyl-sn-glycero-3-phosphocholine(in) = a 1,2-diacyl-sn-glycero-3-phosphocholine(out). The catalysed reaction is a 1,2-diacyl-sn-glycero-3-phosphoethanolamine(in) = a 1,2-diacyl-sn-glycero-3-phosphoethanolamine(out). In terms of biological role, phospholipid scramblase involved in lipid homeostasis and membrane dynamics processes. Has phospholipid scramblase activity toward cholesterol and phosphatidylserine, as well as phosphatidylethanolamine and phosphatidylcholine. Required for autophagosome formation: participates in early stages of autophagosome biogenesis at the endoplasmic reticulum (ER) membrane by reequilibrating the leaflets of the ER as lipids are extracted by ATG2 (ATG2A or ATG2B) to mediate autophagosome assembly. In addition to autophagy, involved in other processes in which phospholipid scramblase activity is required. Required for normal motor neuron development. The chain is Transmembrane protein 41B from Pongo abelii (Sumatran orangutan).